A 480-amino-acid polypeptide reads, in one-letter code: Plant UBX domain-containing protein 10 (480 aa).

Disordered stretches follow at residues 47-78 (DASS…PRGI) and 335-383 (ADQA…AARV). A coiled-coil region spans residues 330–389 (RAALEADQAREQQRQEEKERLEREAAEAERKLKEEEEARERAAREAEERQAARVRMRQEK). Basic and acidic residues predominate over residues 336 to 383 (DQAREQQRQEEKERLEREAAEAERKLKEEEEARERAAREAEERQAARV). The UBX domain maps to 399–477 (KGPDVTQVLV…GLHPQASLFI (79 aa)).

This Arabidopsis thaliana (Mouse-ear cress) protein is Plant UBX domain-containing protein 10.